We begin with the raw amino-acid sequence, 215 residues long: MGKVYDWFEERLEIQAIADDITSKYVPPHVNIFYCLGGITLTCFLVQVASGFAMTFYYRPTVTEAFASVQYIMTEVNFGWLIRSVHRWSASMMVLMMILHVFRVYLTGGFKKPRELTWVTGVILAVLTVSFGVTGYSLPWDQIGYWAVKIVTGVPEAIPLVGSSLVELLRGSVSVGQSTLTRFYSLHTFVLPLLTAVLMLMHFLMIRKQGISGPL.

The chain crosses the membrane as a helical span at residues 32–52 (IFYCLGGITLTCFLVQVASGF). Heme c is bound at residue cysteine 35. Positions 86 and 100 each coordinate heme b. The next 3 helical transmembrane spans lie at 90–110 (ASMM…TGGF), 116–136 (LTWV…VTGY), and 186–206 (LHTF…FLMI). Residues histidine 187 and histidine 202 each contribute to the heme b site.

It belongs to the cytochrome b family. PetB subfamily. The 4 large subunits of the cytochrome b6-f complex are cytochrome b6, subunit IV (17 kDa polypeptide, PetD), cytochrome f and the Rieske protein, while the 4 small subunits are PetG, PetL, PetM and PetN. The complex functions as a dimer. The cofactor is heme b. Heme c serves as cofactor.

Its subcellular location is the plastid. The protein resides in the chloroplast thylakoid membrane. In terms of biological role, component of the cytochrome b6-f complex, which mediates electron transfer between photosystem II (PSII) and photosystem I (PSI), cyclic electron flow around PSI, and state transitions. This is Cytochrome b6 from Anthoceros angustus (Hornwort).